The following is a 115-amino-acid chain: Superoxide reductase (115 aa).

Residues E14, H16, H41, H47, C102, and H105 each contribute to the Fe cation site.

It belongs to the desulfoferrodoxin family. As to quaternary structure, homotetramer. Requires Fe cation as cofactor.

It carries out the reaction reduced [rubredoxin] + superoxide + 2 H(+) = oxidized [rubredoxin] + H2O2. Functionally, uses electrons from reduced NADP, by way of rubredoxin and an oxidoreductase, to catalyze the reduction of superoxide to hydrogen peroxide. The polypeptide is Superoxide reductase (sorA) (Pyrococcus abyssi (strain GE5 / Orsay)).